The sequence spans 206 residues: Ribosomal RNA small subunit methyltransferase G (206 aa).

S-adenosyl-L-methionine is bound by residues G73, L78, 124-125 (VE), and R139.

It belongs to the methyltransferase superfamily. RNA methyltransferase RsmG family.

Its subcellular location is the cytoplasm. The catalysed reaction is guanosine(527) in 16S rRNA + S-adenosyl-L-methionine = N(7)-methylguanosine(527) in 16S rRNA + S-adenosyl-L-homocysteine. Its function is as follows. Specifically methylates the N7 position of guanine in position 527 of 16S rRNA. The protein is Ribosomal RNA small subunit methyltransferase G of Serratia proteamaculans (strain 568).